The following is a 774-amino-acid chain: DNA ligase 3 (774 aa).

A disordered region spans residues 1 to 25; that stretch reads MPPKKRMKNGSSLKSTSKKGEKSRN. Lys433 functions as the N6-AMP-lysine intermediate in the catalytic mechanism.

It belongs to the ATP-dependent DNA ligase family.

It localises to the nucleus. The enzyme catalyses ATP + (deoxyribonucleotide)n-3'-hydroxyl + 5'-phospho-(deoxyribonucleotide)m = (deoxyribonucleotide)n+m + AMP + diphosphate.. This is DNA ligase 3 (adl1) from Schizosaccharomyces pombe (strain 972 / ATCC 24843) (Fission yeast).